Here is a 339-residue protein sequence, read N- to C-terminus: Anthranilate phosphoribosyltransferase (339 aa).

5-phospho-alpha-D-ribose 1-diphosphate-binding positions include G81, 84–85, 91–94, 109–117, and S121; these read GD, NIST, and KHGNRAASS. Residue G81 participates in anthranilate binding. A Mg(2+)-binding site is contributed by S93. Position 112 (N112) interacts with anthranilate. An anthranilate-binding site is contributed by R167. Mg(2+) contacts are provided by D226 and E227.

This sequence belongs to the anthranilate phosphoribosyltransferase family. Homodimer. It depends on Mg(2+) as a cofactor.

The enzyme catalyses N-(5-phospho-beta-D-ribosyl)anthranilate + diphosphate = 5-phospho-alpha-D-ribose 1-diphosphate + anthranilate. Its pathway is amino-acid biosynthesis; L-tryptophan biosynthesis; L-tryptophan from chorismate: step 2/5. In terms of biological role, catalyzes the transfer of the phosphoribosyl group of 5-phosphorylribose-1-pyrophosphate (PRPP) to anthranilate to yield N-(5'-phosphoribosyl)-anthranilate (PRA). This is Anthranilate phosphoribosyltransferase from Maricaulis maris (strain MCS10) (Caulobacter maris).